Consider the following 163-residue polypeptide: Intron-encoded endonuclease I-PpoI (163 aa).

Homodimer. It depends on Zn(2+) as a cofactor.

Its function is as follows. Mediates the homing of a group I intron in the ribosomal DNA. Makes a four-base staggered cut in its ribosomal DNA target sequence. In Physarum polycephalum (Slime mold), this protein is Intron-encoded endonuclease I-PpoI.